A 102-amino-acid chain; its full sequence is Envelope glycoprotein N (102 aa).

A signal peptide spans 1-32 (MGKVLRKPFAKAVPLLFLAATWLLTGVLPAGA). The Virion surface portion of the chain corresponds to 33–69 (SSPTNAAAASLTEAQDQFYSYTCNADTFSPSLTSFAS). The helical transmembrane segment at 70-90 (IWALLTLVLVIIASAIYLMYV) threads the bilayer. Residues 91–102 (CFNKFVNTLLTD) are Intravirion-facing.

It belongs to the herpesviridae glycoprotein N family. As to quaternary structure, interacts (via N-terminus) with gM (via N-terminus). The gM-gN heterodimer forms the gCII complex. O-glycosylated. Contains alpha 2,6-sialic acid residues.

It is found in the virion membrane. It localises to the host membrane. The protein resides in the host Golgi apparatus. Its subcellular location is the host trans-Golgi network. In terms of biological role, envelope glycoprotein necessary for proper maturation of gM and modulation of its membrane fusion activity. Also plays a critical role in virion morphogenesis. In Epstein-Barr virus (strain AG876) (HHV-4), this protein is Envelope glycoprotein N.